Reading from the N-terminus, the 37-residue chain is Large ribosomal subunit protein bL36 (37 aa).

It belongs to the bacterial ribosomal protein bL36 family.

The chain is Large ribosomal subunit protein bL36 from Shewanella frigidimarina (strain NCIMB 400).